A 770-amino-acid chain; its full sequence is MDFVEEFTDEERLKIEQDFSRLADKCYLDHAGTALYGESQLRAVQELLAGGLYCNPHTSRTMEDLIDLVRYRVLRWFQTRPADYSLVFTSGTTASLKLVAESFEFGPGDAEPGSFVYLRDSHTSVLGMRELVRTGRVQPIERAELLQALNEPEDPRRQHPHRPSLLVFPAQCNFNGAKYPLELCELIERNGLRGYGGDAFHVCLDAASHVSTSPLDLSRYRPSFVCLSFYKIFGYPTGLGALLVRRDAEPLLRGKRYYGGGTVKIALSGPDRFHERRDALPDRLEDGTINFLSIAALLPCLETLTRLIPGPTMDRIQRHTFQLARHCYRELQALQHANGGRVVDLYHDTAFGDARTQGAIVNFNVLNDDGGHVGFAEVACMAANHGIYLRTGCFCNPGACQRHLRLADDDLLRHYRAGHVCGDANDLIDGQPTGSVRVSFGYCTRRSDVDRLVAMVRRCYVRRSLTGPLSRADVLAQYKSYDRPRLVQLCLYPVKSCGPLRVTTGGWPLAPTGLLYDRAFLIVDEHGAAMTQKKLPTMCRIRPDIADGRLVLRHADLEDEPLTIGLEGGGEAGEPAAAHLCQTKVCRDSVQGVDCGERAADWVSRALGVSGLRLLRQSGQEPRRQRQTDRALSLNNQAQLLLINRTSVRWLRDKVGDGDWDGADAPSLDALVDRFRGNLIVETVRPLEESDWRQVLIGPSQFTVDGPCTRCQMICIDQATGERTAEPLRTISREFGGRMRFGVYLSLAGDWADRELPLGATVSGVIEESE.

An N6-(pyridoxal phosphate)lysine modification is found at Lys231. Cys395 is a catalytic residue. The MOSC domain maps to 601–770 (DWVSRALGVS…TVSGVIEESE (170 aa)).

This sequence belongs to the class-V pyridoxal-phosphate-dependent aminotransferase family. MOCOS subfamily. The cofactor is pyridoxal 5'-phosphate.

It catalyses the reaction Mo-molybdopterin + L-cysteine + AH2 = thio-Mo-molybdopterin + L-alanine + A + H2O. Functionally, sulfurates the molybdenum cofactor. Sulfation of molybdenum is essential for xanthine dehydrogenase (XDH) and aldehyde oxidase (ADO) enzymes in which molybdenum cofactor is liganded by 1 oxygen and 1 sulfur atom in active form. The sequence is that of Molybdenum cofactor sulfurase from Anopheles gambiae (African malaria mosquito).